The chain runs to 282 residues: Large ribosomal subunit protein uL4c (282 aa).

A chloroplast-targeting transit peptide spans methionine 1–serine 49. The tract at residues glutamate 106–valine 138 is disordered.

It belongs to the universal ribosomal protein uL4 family. In terms of assembly, part of the 50S ribosomal subunit.

The protein localises to the plastid. It localises to the chloroplast. This protein binds directly and specifically to 23S rRNA. May play a role in plastid transcriptional regulation. The polypeptide is Large ribosomal subunit protein uL4c (RPL4) (Arabidopsis thaliana (Mouse-ear cress)).